Reading from the N-terminus, the 372-residue chain is MKFIDEARIEVIAGDGGDGSASMRREKFVPFGGPDGGDGGRGGSVYVIADRNINTLIDYRYAKKHMARNGENGRGSDCYGKGGDDITLRMPVGTVINDMDTGELIADLTEHDQKVLVAKGGAGGLGNLHFKSSTNRAPRQKTDGKPGERRMLKLELKVLADVGLLGMPNAGKSTFISSVSNAKPKIADYPFTTLAPNLGVVRVGPGKSFVIADIPGLIEGAAEGAGLGHQFLRHLQRTGLLLHLVDLAPFDERVDPVAEARAIVGELRKYDESLYEKPRWLVLNKLDMVPEDERRARVADFIERFGWTGPVFEISALTGQGCESLVYAIHDYLVEHSDAHRAELAEDLASDVRFRDAPGAGGEPHERDAGAH.

The Obg domain occupies 1–159; the sequence is MKFIDEARIE…RMLKLELKVL (159 aa). Residues 128 to 147 form a disordered region; sequence LHFKSSTNRAPRQKTDGKPG. The OBG-type G domain maps to 160 to 334; the sequence is ADVGLLGMPN…LVYAIHDYLV (175 aa). Residues 166–173, 191–195, 213–216, 284–287, and 315–317 each bind GTP; these read GMPNAGKS, FTTLA, DIPG, NKLD, and SAL. Mg(2+)-binding residues include Ser-173 and Thr-193.

It belongs to the TRAFAC class OBG-HflX-like GTPase superfamily. OBG GTPase family. In terms of assembly, monomer. Mg(2+) serves as cofactor.

The protein resides in the cytoplasm. An essential GTPase which binds GTP, GDP and possibly (p)ppGpp with moderate affinity, with high nucleotide exchange rates and a fairly low GTP hydrolysis rate. Plays a role in control of the cell cycle, stress response, ribosome biogenesis and in those bacteria that undergo differentiation, in morphogenesis control. In Burkholderia pseudomallei (strain 668), this protein is GTPase Obg.